A 770-amino-acid polypeptide reads, in one-letter code: Semaphorin-4F (770 aa).

Residues 1 to 34 (MPASAARPRPGPGQPTASPFPLLLLAVLSGPVSG) form the signal peptide. Residues 35–659 (RVPRSVPRTS…RDAPSRAHTV (625 aa)) are Extracellular-facing. The Sema domain occupies 42-510 (RTSLPISEAD…SRTEVTQVNT (469 aa)). The N-linked (GlcNAc...) asparagine glycan is linked to N64. Residues C112 and C122 are joined by a disulfide bond. N-linked (GlcNAc...) asparagine glycosylation occurs at N133. Intrachain disulfides connect C140–C149, C273–C384, and C297–C343. N-linked (GlcNAc...) asparagine glycosylation occurs at N509. Positions 512-563 (NCGRLQSCSECILAQDPVCAWSFRLDECVAHAGEHRGLVQDIESADVSSLCP) constitute a PSI domain. Disulfide bonds link C513–C530, C522–C539, and C587–C628. Residues 580–635 (AAHVVLPCSPSSAWASCVWHQPSGVTALTPRRDGLEVVVTPGAMGAYACECQEGGA) form the Ig-like C2-type domain. Residues 660 to 680 (GAGLAGFFLGILAASLTLILI) traverse the membrane as a helical segment. At 681–770 (GRRQQRRRQR…PLATCDETSI (90 aa)) the chain is on the cytoplasmic side. The segment at 696–725 (DKVGLDLGAPPSGTTSYSQDPPSPSPEDER) is disordered. Residues S718 and S720 each carry the phosphoserine modification. Positions 768–770 (TSI) match the PDZ-binding motif.

This sequence belongs to the semaphorin family. As to quaternary structure, interacts (via PDZ-binding motif) with DLG4/SAP90 (via PDZ domain 2); this interaction may promote translocation of DLG4/SAP90 to the membrane.

The protein resides in the cell membrane. Its subcellular location is the postsynaptic density. It localises to the perikaryon. The protein localises to the cell projection. It is found in the dendrite. Probable cell surface receptor that regulates oligodendroglial precursor cell migration. Might also regulate differentiation of oligodendroglial precursor cells. Has growth cone collapse activity against retinal ganglion-cell axons. The sequence is that of Semaphorin-4F (SEMA4F) from Homo sapiens (Human).